The primary structure comprises 460 residues: Glycine--tRNA ligase (460 aa).

Positions 98 and 172 each coordinate substrate. ATP-binding positions include 204–206 (RNE), 214–219 (FRTREF), 288–289 (EL), and 332–335 (GADR). Position 219-223 (219-223 (FEQME)) interacts with substrate. 328–332 (EPSLG) is a substrate binding site.

It belongs to the class-II aminoacyl-tRNA synthetase family. Homodimer.

Its subcellular location is the cytoplasm. It catalyses the reaction tRNA(Gly) + glycine + ATP = glycyl-tRNA(Gly) + AMP + diphosphate. In terms of biological role, catalyzes the attachment of glycine to tRNA(Gly). The chain is Glycine--tRNA ligase from Geobacillus kaustophilus (strain HTA426).